The chain runs to 140 residues: Putative transcription elongation factor S-II-like protein 349L (140 aa).

The TFIIS-type zinc-finger motif lies at Gly-100 to Val-139. Zn(2+) contacts are provided by Cys-104, Cys-106, Cys-131, and Cys-134.

It belongs to the IIV-6 349L family.

This Acheta domesticus (House cricket) protein is Putative transcription elongation factor S-II-like protein 349L.